Here is a 263-residue protein sequence, read N- to C-terminus: MDLQLKEKLVLITGSTSGIGKAAAKSFLQEGAAVIVNGRKQETVDRTIEELSGYGTVHGAAADLSKTDEAAAFIEKVNEIGDIDILVNNLGFFEVKDFADVTDEEWNQYFEVNVMSAVRTSRHFLPKMLAKNSGRILNIASEAGVKPLPTMIPYSMTKTALISLSRGMAEMTKGTNVTVNSVLPGPTWTEGVASYMEGAAQAAGQDTDTFIKDYFKVNEPTSLIQRYATAEEVANTIVFLASDAASAINGTAQRVEGGIIRSL.

Thr-13 to Gly-20 lines the NADP(+) pocket. Ser-141 provides a ligand contact to substrate. Tyr-154 serves as the catalytic Proton acceptor.

Belongs to the short-chain dehydrogenases/reductases (SDR) family.

This is an uncharacterized protein from Bacillus subtilis (strain 168).